Reading from the N-terminus, the 96-residue chain is Glutamyl-tRNA(Gln) amidotransferase subunit C (96 aa).

It belongs to the GatC family. In terms of assembly, heterotrimer of A, B and C subunits.

The enzyme catalyses L-glutamyl-tRNA(Gln) + L-glutamine + ATP + H2O = L-glutaminyl-tRNA(Gln) + L-glutamate + ADP + phosphate + H(+). It carries out the reaction L-aspartyl-tRNA(Asn) + L-glutamine + ATP + H2O = L-asparaginyl-tRNA(Asn) + L-glutamate + ADP + phosphate + 2 H(+). Its function is as follows. Allows the formation of correctly charged Asn-tRNA(Asn) or Gln-tRNA(Gln) through the transamidation of misacylated Asp-tRNA(Asn) or Glu-tRNA(Gln) in organisms which lack either or both of asparaginyl-tRNA or glutaminyl-tRNA synthetases. The reaction takes place in the presence of glutamine and ATP through an activated phospho-Asp-tRNA(Asn) or phospho-Glu-tRNA(Gln). The chain is Glutamyl-tRNA(Gln) amidotransferase subunit C from Halalkalibacterium halodurans (strain ATCC BAA-125 / DSM 18197 / FERM 7344 / JCM 9153 / C-125) (Bacillus halodurans).